A 244-amino-acid polypeptide reads, in one-letter code: 1-(5-phosphoribosyl)-5-[(5-phosphoribosylamino)methylideneamino] imidazole-4-carboxamide isomerase (244 aa).

Aspartate 8 serves as the catalytic Proton acceptor. Aspartate 129 serves as the catalytic Proton donor.

It belongs to the HisA/HisF family.

It localises to the cytoplasm. It carries out the reaction 1-(5-phospho-beta-D-ribosyl)-5-[(5-phospho-beta-D-ribosylamino)methylideneamino]imidazole-4-carboxamide = 5-[(5-phospho-1-deoxy-D-ribulos-1-ylimino)methylamino]-1-(5-phospho-beta-D-ribosyl)imidazole-4-carboxamide. Its pathway is amino-acid biosynthesis; L-histidine biosynthesis; L-histidine from 5-phospho-alpha-D-ribose 1-diphosphate: step 4/9. The sequence is that of 1-(5-phosphoribosyl)-5-[(5-phosphoribosylamino)methylideneamino] imidazole-4-carboxamide isomerase from Thermodesulfovibrio yellowstonii (strain ATCC 51303 / DSM 11347 / YP87).